A 452-amino-acid chain; its full sequence is Lamina-associated polypeptide 2, isoform beta (452 aa).

The tract at residues 1–409 is nucleoplasmic; that stretch reads MPEFLEDPSV…KSEKTKKGRS (409 aa). An LEM-like domain is found at 5-48; the sequence is LEDPSVLTKDKLKSELVANNVTLPAGEQRKDVYVQLYLQHLTAR. Disordered stretches follow at residues 48–113 and 149–264; these read RNRP…DVTE and REQG…VEPS. The tract at residues 49 to 107 is linker; sequence NRPPLAAGANSKGPPDFSSDEEREPTPVLGSGASVGRGRGAVGRKATKKTDKPRPEDKD. Residues Ser66 and Ser67 each carry the phosphoserine modification. Thr74 is modified (phosphothreonine). Ser82 carries the phosphoserine modification. Omega-N-methylarginine is present on residues Arg85 and Arg87. Residues 96–105 show a composition bias toward basic and acidic residues; sequence KKTDKPRPED. The region spanning 108-152 is the LEM domain; sequence DLDVTELSNEELLEQLVRYGVNPGPIVGTTRKLYEKKLLKLREQG. Residues 137-242 form an NAKAP95-binding N region; it reads TRKLYEKKLL…TSGSSKGGPL (106 aa). A compositionally biased stretch (polar residues) spans 154 to 177; the sequence is ESRSSTPLPTVSSSAENTRQNGSN. A phosphoserine mark is found at Ser155 and Ser158. Thr159 carries the post-translational modification Phosphothreonine. A phosphoserine mark is found at Ser165, Ser167, Ser176, Ser179, and Ser183. Over residues 178-202 the composition is skewed to basic and acidic residues; it reads DSDRYSDNDEDSKIELKLEKREPLK. An N6-acetyllysine modification is found at Lys206. A binds lamins B region spans residues 298-370; it reads TGNFKHASSI…SCRRPIKGAA (73 aa). The segment at 299–373 is NAKAP95-binding C; that stretch reads GNFKHASSIL…RPIKGAAGRP (75 aa). Phosphoserine occurs at positions 305, 306, and 361. Lys388 carries the post-translational modification N6-acetyllysine. A helical; Signal-anchor for type II membrane protein membrane pass occupies residues 410 to 430; that stretch reads VPMWIKMLLFALVAGFLFLVY. Residues 431 to 452 are Lumenal-facing; the sequence is QAMETNQGNPFTNFLQDTKISN.

It belongs to the LEM family. Interacts with LMNB1, LMNB2, BANF1, AKAP8L, GMCL and chromosomes. Post-translationally, mitosis-specific phosphorylation specifically abolishes its binding to lamin B and chromosomes.

It localises to the nucleus inner membrane. The protein resides in the chromosome. Binds directly to lamin B1 and chromosomes in a mitotic phosphorylation-regulated manner. May play an important role in nuclear envelope reassembly at the end of mitosis and/or anchoring of the nuclear lamina and interphase chromosomes to the nuclear envelope. In Rattus norvegicus (Rat), this protein is Lamina-associated polypeptide 2, isoform beta (Tmpo).